We begin with the raw amino-acid sequence, 519 residues long: Maturase K (519 aa).

It belongs to the intron maturase 2 family. MatK subfamily.

The protein resides in the plastid. It localises to the chloroplast. Its function is as follows. Usually encoded in the trnK tRNA gene intron. Probably assists in splicing its own and other chloroplast group II introns. This Keteleeria davidiana (David's keteleeria) protein is Maturase K.